Here is a 152-residue protein sequence, read N- to C-terminus: Transcriptional repressor NrdR (152 aa).

The segment at 1–21 (MRCPFCGNGDTQVKDSRPTED) is disordered. Residues 3–34 (CPFCGNGDTQVKDSRPTEDSAAIRRRRFCPAC) fold into a zinc finger. Over residues 12 to 21 (QVKDSRPTED) the composition is skewed to basic and acidic residues. One can recognise an ATP-cone domain in the interval 49–139 (LVIVKKDGQR…VYRNFREAKD (91 aa)).

This sequence belongs to the NrdR family. It depends on Zn(2+) as a cofactor.

Functionally, negatively regulates transcription of bacterial ribonucleotide reductase nrd genes and operons by binding to NrdR-boxes. This chain is Transcriptional repressor NrdR, found in Rhodospirillum rubrum (strain ATCC 11170 / ATH 1.1.1 / DSM 467 / LMG 4362 / NCIMB 8255 / S1).